Reading from the N-terminus, the 468-residue chain is Hepatocyte nuclear factor 3-alpha (468 aa).

A DNA-binding region (fork-head) is located at residues 169–260 (AKPPYSYISL…GNMFENGCYL (92 aa)). Positions 251 to 288 (GNMFENGCYLRRQKRFKCEKQPGAGGGSGGGGSKGGPE) are essential for DNA binding. Residues 269–396 (EKQPGAGGGS…DPHYSFNHPF (128 aa)) form a disordered region. The span at 273 to 285 (GAGGGSGGGGSKG) shows a compositional bias: gly residues. A phosphoserine mark is found at Ser303 and Ser327. 2 stretches are compositionally biased toward low complexity: residues 318 to 328 (GAPAPGPAASP) and 347 to 365 (SPASSSAPPISSGPGALAS).

As to quaternary structure, binds DNA as a monomer. Interacts with FOXA2. Interacts with NKX2-1. Interacts with HDAC7. Interacts with the histone H3-H4 heterodimer. Associates with nucleosomes containing histone H2A. Interacts with AR. Interacts with NR0B2. Restricted mainly to endoderm-derived tissues (lung, liver, stomach, and small intestine). Expressed in the prostate.

Its subcellular location is the nucleus. Functionally, transcription factor that is involved in embryonic development, establishment of tissue-specific gene expression and regulation of gene expression in differentiated tissues. Is thought to act as a 'pioneer' factor opening the compacted chromatin for other proteins through interactions with nucleosomal core histones and thereby replacing linker histones at target enhancer and/or promoter sites. Binds DNA with the consensus sequence 5'-[AC]A[AT]T[AG]TT[GT][AG][CT]T[CT]-3'. Proposed to play a role in translating the epigenetic signatures into cell type-specific enhancer-driven transcriptional programs. Involved in the development of multiple endoderm-derived organ systems such as the liver, pancreas, lungs and prostate; FOXA1 and FOXA2 seem to have at least in part redundant roles. Plays a role in prostate morphogenesis and epithelial cell differentiation. FOXA1 and FOXA2 are essential for hepatic specification. FOXA1 and FOXA2 are required for morphogenesis and cell differentiation during formation of the lung. FOXA1 and FOXA2 are involved in bile duct formation; they positively regulate the binding of glucocorticoid receptor/NR3C1 to the IL6 promoter. FOXA1 and FOXA2 regulate multiple phases of midbrain dopaminergic neuron development; they regulate expression of NEUROG2 at the beginning of mDA neurogenesis and of NR4A2 and EN1 in immature mDA neurons. Modulates the transcriptional activity of nuclear hormone receptors. Is involved in ESR1-mediated transcription. Inhibits NKX2-1-mediated transcription from the SFTPC promoter in lung epithel independently from DNA-binding. Involved in regulation of apoptosis. Involved in cell cycle regulation. Originally described as a transcription activator for a number of liver genes such as AFP, albumin, tyrosine aminotransferase, PEPCK, etc. Interacts with the cis-acting regulatory regions of these genes. Involved in glucose homeostasis; activates the GCG promoter. The chain is Hepatocyte nuclear factor 3-alpha (Foxa1) from Mus musculus (Mouse).